We begin with the raw amino-acid sequence, 592 residues long: A-type ATP synthase subunit A (592 aa).

234–241 (GPFGSGKT) is an ATP binding site.

Belongs to the ATPase alpha/beta chains family. In terms of assembly, has multiple subunits with at least A(3), B(3), C, D, E, F, H, I and proteolipid K(x).

It localises to the cell membrane. It carries out the reaction ATP + H2O + 4 H(+)(in) = ADP + phosphate + 5 H(+)(out). In terms of biological role, produces ATP from ADP in the presence of a proton gradient across the membrane. The archaeal alpha chain is a catalytic subunit. Functionally, component of the A-type ATP synthase that produces ATP from ADP in the presence of a proton gradient across the membrane. The A chain is the catalytic subunit. This chain is A-type ATP synthase subunit A, found in Sulfolobus acidocaldarius (strain ATCC 33909 / DSM 639 / JCM 8929 / NBRC 15157 / NCIMB 11770).